The following is a 291-amino-acid chain: MFEGAMPALITPFTKDDRIDREGLQRNIAFVEEGGVSGIVPCGTTGESATLSAAEHEEVIDIAVECSKVPVIAGTGSNNTGEALQFTKHAADAGVDGVLLISPYYNKPNPAGLLAHFKKIAEAVDIPMILYNVPSRTGQDMPVDVIVELAKVENIVGIKEASGNAAKVSQILENTMDDDFVVLSGEDGLTLPIISMGGRGVISVAANIVPDKMSGMVNAALKGDYETARKLHFEIAPLIRALFLETNPIPVKKAAELVGLASGHLRLPLAPISDANQAKLANELRKLGVME.

T45 provides a ligand contact to pyruvate. Residue Y131 is the Proton donor/acceptor of the active site. The Schiff-base intermediate with substrate role is filled by K159. Pyruvate is bound at residue I202.

This sequence belongs to the DapA family. In terms of assembly, homotetramer; dimer of dimers.

It localises to the cytoplasm. It carries out the reaction L-aspartate 4-semialdehyde + pyruvate = (2S,4S)-4-hydroxy-2,3,4,5-tetrahydrodipicolinate + H2O + H(+). Its pathway is amino-acid biosynthesis; L-lysine biosynthesis via DAP pathway; (S)-tetrahydrodipicolinate from L-aspartate: step 3/4. Catalyzes the condensation of (S)-aspartate-beta-semialdehyde [(S)-ASA] and pyruvate to 4-hydroxy-tetrahydrodipicolinate (HTPA). The sequence is that of 4-hydroxy-tetrahydrodipicolinate synthase from Methanosarcina mazei (strain ATCC BAA-159 / DSM 3647 / Goe1 / Go1 / JCM 11833 / OCM 88) (Methanosarcina frisia).